The primary structure comprises 156 residues: Ribosomal RNA large subunit methyltransferase H (156 aa).

Residues L73, G104, and 123-128 contribute to the S-adenosyl-L-methionine site; that span reads LSALTL.

This sequence belongs to the RNA methyltransferase RlmH family. Homodimer.

It localises to the cytoplasm. The catalysed reaction is pseudouridine(1915) in 23S rRNA + S-adenosyl-L-methionine = N(3)-methylpseudouridine(1915) in 23S rRNA + S-adenosyl-L-homocysteine + H(+). Its function is as follows. Specifically methylates the pseudouridine at position 1915 (m3Psi1915) in 23S rRNA. This chain is Ribosomal RNA large subunit methyltransferase H, found in Shewanella piezotolerans (strain WP3 / JCM 13877).